The chain runs to 205 residues: uncharacterized protein (205 aa).

Transmembrane regions (helical) follow at residues 18–38, 69–89, 106–126, and 127–147; these read ATVN…GTIG, LGIF…CFYA, VVWI…YYIM, and LLHP…LFLI.

It localises to the mitochondrion membrane. This is an uncharacterized protein from Arabidopsis thaliana (Mouse-ear cress).